Consider the following 267-residue polypeptide: Dihydropteroate synthase (267 aa).

One can recognise a Pterin-binding domain in the interval 1-251 (MTKTKIMGIL…NVELNAKLAK (251 aa)). Mg(2+) is bound at residue Asn11. (7,8-dihydropterin-6-yl)methyl diphosphate is bound by residues Thr51, Asp84, Asn103, Asp167, Lys203, and 239–241 (RVH).

This sequence belongs to the DHPS family. In terms of assembly, homodimer. It depends on Mg(2+) as a cofactor.

The catalysed reaction is (7,8-dihydropterin-6-yl)methyl diphosphate + 4-aminobenzoate = 7,8-dihydropteroate + diphosphate. The protein operates within cofactor biosynthesis; tetrahydrofolate biosynthesis; 7,8-dihydrofolate from 2-amino-4-hydroxy-6-hydroxymethyl-7,8-dihydropteridine diphosphate and 4-aminobenzoate: step 1/2. Its function is as follows. Catalyzes the condensation of para-aminobenzoate (pABA) with 6-hydroxymethyl-7,8-dihydropterin diphosphate (DHPt-PP) to form 7,8-dihydropteroate (H2Pte), the immediate precursor of folate derivatives. The sequence is that of Dihydropteroate synthase (folP) from Staphylococcus aureus (strain MSSA476).